The primary structure comprises 198 residues: Small ribosomal subunit protein uS4 (198 aa).

Residues 26–45 (LKKRPYAPGQHGQRRSKLSN) are disordered. Residues 91 to 154 (SRLDNVVYRL…KNLTIVKEAL (64 aa)) enclose the S4 RNA-binding domain.

The protein belongs to the universal ribosomal protein uS4 family. As to quaternary structure, part of the 30S ribosomal subunit. Contacts protein S5. The interaction surface between S4 and S5 is involved in control of translational fidelity.

In terms of biological role, one of the primary rRNA binding proteins, it binds directly to 16S rRNA where it nucleates assembly of the body of the 30S subunit. Its function is as follows. With S5 and S12 plays an important role in translational accuracy. This Acholeplasma laidlawii (strain PG-8A) protein is Small ribosomal subunit protein uS4.